Consider the following 639-residue polypeptide: UvrABC system protein C (639 aa).

The region spanning 20–97 (ERSGVYRMFD…IKKFQPKFNI (78 aa)) is the GIY-YIG domain. Residues 207-242 (KELQENLSRKMEELSSQMRFEEAAEIRDRIKALSYV) enclose the UVR domain.

This sequence belongs to the UvrC family. In terms of assembly, interacts with UvrB in an incision complex.

It is found in the cytoplasm. Functionally, the UvrABC repair system catalyzes the recognition and processing of DNA lesions. UvrC both incises the 5' and 3' sides of the lesion. The N-terminal half is responsible for the 3' incision and the C-terminal half is responsible for the 5' incision. The sequence is that of UvrABC system protein C from Rickettsia africae (strain ESF-5).